Consider the following 284-residue polypeptide: 2-dehydro-3-deoxyphosphooctonate aldolase (284 aa).

Belongs to the KdsA family.

The protein resides in the cytoplasm. The catalysed reaction is D-arabinose 5-phosphate + phosphoenolpyruvate + H2O = 3-deoxy-alpha-D-manno-2-octulosonate-8-phosphate + phosphate. It functions in the pathway carbohydrate biosynthesis; 3-deoxy-D-manno-octulosonate biosynthesis; 3-deoxy-D-manno-octulosonate from D-ribulose 5-phosphate: step 2/3. It participates in bacterial outer membrane biogenesis; lipopolysaccharide biosynthesis. In Methylobacterium radiotolerans (strain ATCC 27329 / DSM 1819 / JCM 2831 / NBRC 15690 / NCIMB 10815 / 0-1), this protein is 2-dehydro-3-deoxyphosphooctonate aldolase.